Here is a 336-residue protein sequence, read N- to C-terminus: Dihydroorotate dehydrogenase (quinone) (336 aa).

FMN is bound by residues 62 to 66 (AGLDK) and Thr-86. Residue Lys-66 participates in substrate binding. A substrate-binding site is contributed by 111–115 (NRMGF). 2 residues coordinate FMN: Asn-139 and Asn-172. A substrate-binding site is contributed by Asn-172. Ser-175 acts as the Nucleophile in catalysis. Asn-177 is a binding site for substrate. FMN contacts are provided by Lys-217 and Thr-245. 246–247 (NT) contributes to the substrate binding site. Residues Gly-268, Gly-297, and 318-319 (FS) contribute to the FMN site.

This sequence belongs to the dihydroorotate dehydrogenase family. Type 2 subfamily. Monomer. Requires FMN as cofactor.

The protein resides in the cell membrane. The enzyme catalyses (S)-dihydroorotate + a quinone = orotate + a quinol. Its pathway is pyrimidine metabolism; UMP biosynthesis via de novo pathway; orotate from (S)-dihydroorotate (quinone route): step 1/1. In terms of biological role, catalyzes the conversion of dihydroorotate to orotate with quinone as electron acceptor. The chain is Dihydroorotate dehydrogenase (quinone) from Photorhabdus laumondii subsp. laumondii (strain DSM 15139 / CIP 105565 / TT01) (Photorhabdus luminescens subsp. laumondii).